The primary structure comprises 267 residues: Stomatin-3 (267 aa).

Residues 17–37 form a helical membrane-spanning segment; that stretch reads FVALICAWAFLLLTFPVSIFF.

Belongs to the band 7/mec-2 family.

It localises to the membrane. This Caenorhabditis elegans protein is Stomatin-3 (sto-3).